The primary structure comprises 347 residues: Protein RecA (347 aa).

Residue 67 to 74 (GPESSGKT) coordinates ATP.

This sequence belongs to the RecA family.

The protein localises to the cytoplasm. Can catalyze the hydrolysis of ATP in the presence of single-stranded DNA, the ATP-dependent uptake of single-stranded DNA by duplex DNA, and the ATP-dependent hybridization of homologous single-stranded DNAs. It interacts with LexA causing its activation and leading to its autocatalytic cleavage. This is Protein RecA from Helicobacter acinonychis (strain Sheeba).